Here is a 231-residue protein sequence, read N- to C-terminus: MEEEFLSFKNFLQEDQDKREKIIRLSREITIQSKRMIFLLHQTSSSDGFPLPKDFDRTSIFEKKIHKELESLKRELAGLNADKFSSACTHGLQEYVEAVTFKFWLQTGTLLSCKDSSFRISINFIDYVLGVCDMTGEIMRFLVTNGSKFSVQQLTQQVKFLRGLHKNCSEIEHLPSKVKSELQQKLSVMENSISKVEGICYSKILREADKRYLNLEVDTATPPEEKRLRST.

This sequence belongs to the translin family.

Its subcellular location is the cytoplasm. The protein resides in the nucleus. The chain is Translin-associated protein X homolog from Schizosaccharomyces pombe (strain 972 / ATCC 24843) (Fission yeast).